A 30-amino-acid chain; its full sequence is Cycloviolacin-O24 (30 aa).

The segment at residues G1–N30 is a cross-link (cyclopeptide (Gly-Asn)). 3 cysteine pairs are disulfide-bonded: C5–C19, C9–C21, and C14–C27.

In terms of processing, this is a cyclic peptide. In terms of tissue distribution, expressed in leaves but not in petals, petioles, roots and runners (at protein level).

Its function is as follows. Probably participates in a plant defense mechanism. Has hemolytic activity. In Viola odorata (Sweet violet), this protein is Cycloviolacin-O24.